The following is a 228-amino-acid chain: PKHD-type hydroxylase XC_1340 (228 aa).

Residues 78–180 (RIYPPLFNRY…RVASFFWIQS (103 aa)) form the Fe2OG dioxygenase domain. Fe cation contacts are provided by His-96, Asp-98, and His-161. Arg-171 lines the 2-oxoglutarate pocket.

The cofactor is Fe(2+). L-ascorbate is required as a cofactor.

The chain is PKHD-type hydroxylase XC_1340 from Xanthomonas campestris pv. campestris (strain 8004).